Consider the following 428-residue polypeptide: Nucleoside diphosphate phosphatase ENTPD5 (428 aa).

The signal sequence occupies residues 1–24 (MATSWGTVFFMLVVSCVCSAVSHR). Glu172 (proton acceptor) is an active-site residue. Residue Asn232 is glycosylated (N-linked (GlcNAc...) asparagine). 2 cysteine pairs are disulfide-bonded: Cys272-Cys303 and Cys363-Cys377. An N-linked (GlcNAc...) asparagine glycan is attached at Asn368.

Belongs to the GDA1/CD39 NTPase family. In terms of assembly, monomer; active form. Homodimer; disulfide-linked. Homodimers are enzymatically inactive. Ca(2+) is required as a cofactor. Requires Mg(2+) as cofactor. Post-translationally, N-glycosylated; high-mannose type. Glycosylation is not essential for enzymatic activity. Expressed in adult liver, kidney, prostate, testis and colon. Much weaker expression in other tissues.

Its subcellular location is the endoplasmic reticulum. It is found in the secreted. It carries out the reaction a ribonucleoside 5'-diphosphate + H2O = a ribonucleoside 5'-phosphate + phosphate + H(+). It catalyses the reaction GDP + H2O = GMP + phosphate + H(+). The catalysed reaction is UDP + H2O = UMP + phosphate + H(+). The enzyme catalyses IDP + H2O = IMP + phosphate + H(+). It carries out the reaction CDP + H2O = CMP + phosphate + H(+). It catalyses the reaction ADP + H2O = AMP + phosphate + H(+). It functions in the pathway protein modification; protein glycosylation. Hydrolyzes nucleoside diphosphates with a preference for GDP, IDP and UDP compared to ADP and CDP. In the lumen of the endoplasmic reticulum, hydrolyzes UDP that acts as an end-product feedback inhibitor of the UDP-Glc:glycoprotein glucosyltransferases. UMP can be transported back by an UDP-sugar antiporter to the cytosol where it is consumed to regenerate UDP-glucose. Therefore, it positively regulates protein reglucosylation by clearing UDP from the ER lumen and by promoting the regeneration of UDP-glucose. Protein reglucosylation is essential to proper glycoprotein folding and quality control in the ER. The sequence is that of Nucleoside diphosphate phosphatase ENTPD5 from Homo sapiens (Human).